A 321-amino-acid polypeptide reads, in one-letter code: MIKLLYPEFWQKRNIIAYLLLPISVIYQFLGYLRASLARPIMLPAKVICVGNCSVGGTGKTQIVMYLAKLLKARNVSFVIVTKAYGSNLTSATTIHQGHTALEVGDEGVILAKYGAVIATKNIKEIVPLLNELKPDIIIVDDFLQNPYFHKDFTIVSVDSQRLFGNGFLIPAGPLRQYPNKALDAADLIFLVSSHQDKIPNILTPYVNKLINAQIVPSNNIDKTKNYFAFSGIGNPERFFATLKNYGLNITGYKIFPDHYNYLQADLENLYSLAKEHNATLVTTRKDHVKFNDLNNNIVCLDVELSINHPDLLNEKIFKKA.

54-61 (SVGGTGKT) lines the ATP pocket.

Belongs to the LpxK family.

It carries out the reaction a lipid A disaccharide + ATP = a lipid IVA + ADP + H(+). Its pathway is glycolipid biosynthesis; lipid IV(A) biosynthesis; lipid IV(A) from (3R)-3-hydroxytetradecanoyl-[acyl-carrier-protein] and UDP-N-acetyl-alpha-D-glucosamine: step 6/6. Its function is as follows. Transfers the gamma-phosphate of ATP to the 4'-position of a tetraacyldisaccharide 1-phosphate intermediate (termed DS-1-P) to form tetraacyldisaccharide 1,4'-bis-phosphate (lipid IVA). This is Tetraacyldisaccharide 4'-kinase from Rickettsia africae (strain ESF-5).